Consider the following 1166-residue polypeptide: Reverse gyrase (1166 aa).

The RG N-terminal-type zinc finger occupies 1-40; the sequence is MINVMYKNSCPNCGGDISADRLLNGLPCETCLPYINGIDG. Zn(2+) is bound by residues C10, C13, C28, and C31. Residues Q92 and 109-116 each bind ATP; that span reads APTGLGKT. The Helicase ATP-binding domain occupies 96 to 285; sequence LRRLVSNQSF…ALRLLTGFEP (190 aa). Residues 190–193 carry the DEAD box motif; that stretch reads DDAD. Residues 576 to 1166 are topoisomerase I; sequence FNISTGLLIV…VNPLKSEQNV (591 aa). Residues 580-743 form the Toprim domain; sequence TGLLIVESPT…NIYRITYHEI (164 aa). E586 contributes to the Mg(2+) binding site. An RG C-terminal-type zinc finger spans residues 662 to 689; that stretch reads IKKCLDCNKTFSIASDKCPYCGSTNVQT. The Zn(2+) site is built by C665, C668, C679, and C682. D712 is a Mg(2+) binding site. The Topo IA-type catalytic domain occupies 759–1157; it reads NTNLVMSQIV…EIFSEISTLV (399 aa). Y903 functions as the O-(5'-phospho-DNA)-tyrosine intermediate in the catalytic mechanism.

This sequence in the N-terminal section; belongs to the DEAD box helicase family. DDVD subfamily. In the C-terminal section; belongs to the type IA topoisomerase family. As to quaternary structure, monomer. It depends on Zn(2+) as a cofactor. Mg(2+) serves as cofactor.

Its subcellular location is the cytoplasm. The enzyme catalyses ATP + H2O = ADP + phosphate + H(+). Its activity is regulated as follows. Inhibited by UV light-induced lesions; substrate is completely cleaved but a nicked form accumulates, suggesting the reaction is blocked between the cleavage and ligation steps. Inhibited by actinomycin D; substrate DNA remains negatively supercoiled in this case. Activity is stimulated by SSB from S.solfataricus strain P2. Positive supercoiling is inhibited by Sul7d (also called Sso7d) from S.solfataricus strain MT4; SSB from S.solfataricus strain P2 relieves this inhibition. Functionally, modifies the topological state of DNA by introducing positive supercoils in an ATP-dependent process. Increases the linking number in steps of +1. In vitro requires high concentrations to supercoil negatively supercoiled DNA, relaxes plasmid DNA first; DNA single-strand binding protein (SSB) from S.solfataricus strain P2 stimulates positive supercoiling. SSB stimulates DNA-binding by reverse gyrase, and thus all subsequent steps. Binds to single-stranded DNA, transiently cleaves and then rejoins the ends, introducing a positive supercoil in the process. The scissile phosphodiester is attacked by the catalytic tyrosine of the enzyme, resulting in the formation of a DNA-(5'-phosphotyrosyl)-enzyme intermediate. May be involved in DNA damage response. Probably involved in rewinding DNA strands in regions of the chromosome that have opened up to allow replication, transcription, DNA repair and/or for DNA protection. The chain is Reverse gyrase from Saccharolobus shibatae (strain ATCC 51178 / DSM 5389 / JCM 8931 / NBRC 15437 / B12) (Sulfolobus shibatae).